A 247-amino-acid polypeptide reads, in one-letter code: Cytochrome c oxidase subunit 2 (247 aa).

Over 12 to 38 (DVPTPWGLYFQDSSTPNQEGIIELHDN) the chain is Mitochondrial intermembrane. Residues 39–59 (IMFYLVLILCTVSWLLFSIVK) form a helical membrane-spanning segment. Residues 60–78 (DSSKNPLPHKYLVHGQTIE) are Mitochondrial matrix-facing. A helical transmembrane segment spans residues 79 to 101 (IIWTILPAVVLLIIAFPSFILLY). Residues 102-247 (LCDEVISPAM…KEFLTWLNEQ (146 aa)) are Mitochondrial intermembrane-facing. Cu cation is bound by residues H182, C217, E219, C221, H225, and M228. E219 lines the Mg(2+) pocket.

Belongs to the cytochrome c oxidase subunit 2 family. As to quaternary structure, component of the cytochrome c oxidase (complex IV, CIV), a multisubunit enzyme composed of a catalytic core of 3 subunits and several supernumerary subunits. The complex exists as a monomer or a dimer and forms supercomplexes (SCs) in the inner mitochondrial membrane with ubiquinol-cytochrome c oxidoreductase (cytochrome b-c1 complex, complex III, CIII). Requires Cu cation as cofactor. The signal sequence of COX2 is processed by IMP1.

The protein localises to the mitochondrion inner membrane. The enzyme catalyses 4 Fe(II)-[cytochrome c] + O2 + 8 H(+)(in) = 4 Fe(III)-[cytochrome c] + 2 H2O + 4 H(+)(out). In terms of biological role, component of the cytochrome c oxidase, the last enzyme in the mitochondrial electron transport chain which drives oxidative phosphorylation. The respiratory chain contains 3 multisubunit complexes succinate dehydrogenase (complex II, CII), ubiquinol-cytochrome c oxidoreductase (cytochrome b-c1 complex, complex III, CIII) and cytochrome c oxidase (complex IV, CIV), that cooperate to transfer electrons derived from NADH and succinate to molecular oxygen, creating an electrochemical gradient over the inner membrane that drives transmembrane transport and the ATP synthase. Cytochrome c oxidase is the component of the respiratory chain that catalyzes the reduction of oxygen to water. Electrons originating from reduced cytochrome c in the intermembrane space (IMS) are transferred via the dinuclear copper A center (CU(A)) of subunit 2 and heme A of subunit 1 to the active site in subunit 1, a binuclear center (BNC) formed by heme A3 and copper B (CU(B)). The BNC reduces molecular oxygen to 2 water molecules using 4 electrons from cytochrome c in the IMS and 4 protons from the mitochondrial matrix. The chain is Cytochrome c oxidase subunit 2 (COX2) from Cyberlindnera saturnus (Yeast).